The primary structure comprises 816 residues: Probable disease resistance protein At4g33300 (816 aa).

Residues 1–149 (MAITDFFAGE…SLDRVIQQVG (149 aa)) enclose the RPW8 domain. A coiled-coil region spans residues 95–111 (TLARKMEKLEKTISNFL). Positions 191 to 443 (VKKMMFESQG…LDVLINIWIE (253 aa)) constitute an NB-ARC domain. Residue 207-214 (GMGGVGKT) coordinates ATP. Residues 399 to 415 (SRLLRQMEASLDNLDQT) are a coiled coil. LRR repeat units lie at residues 681 to 704 (SLSC…SKLQ), 705 to 727 (ALEI…ICEL), 729 to 751 (GLKY…IGKL), and 753 to 774 (KLEK…AVSL).

The protein belongs to the disease resistance NB-LRR family.

Its function is as follows. Probable disease resistance protein. The polypeptide is Probable disease resistance protein At4g33300 (Arabidopsis thaliana (Mouse-ear cress)).